A 157-amino-acid polypeptide reads, in one-letter code: Protein-export protein SecB (157 aa).

The protein belongs to the SecB family. As to quaternary structure, homotetramer, a dimer of dimers. One homotetramer interacts with 1 SecA dimer.

The protein resides in the cytoplasm. Its function is as follows. One of the proteins required for the normal export of preproteins out of the cell cytoplasm. It is a molecular chaperone that binds to a subset of precursor proteins, maintaining them in a translocation-competent state. It also specifically binds to its receptor SecA. This chain is Protein-export protein SecB, found in Shewanella frigidimarina (strain NCIMB 400).